The following is a 162-amino-acid chain: Transcription antitermination protein NusB (162 aa).

The protein belongs to the NusB family.

Involved in transcription antitermination. Required for transcription of ribosomal RNA (rRNA) genes. Binds specifically to the boxA antiterminator sequence of the ribosomal RNA (rrn) operons. The chain is Transcription antitermination protein NusB from Xanthomonas euvesicatoria pv. vesicatoria (strain 85-10) (Xanthomonas campestris pv. vesicatoria).